Reading from the N-terminus, the 109-residue chain is U4-lycotoxin-Ls1a (109 aa).

The first 22 residues, 1-22, serve as a signal peptide directing secretion; that stretch reads MKVLVLFSVLFLTLFSYSSTEA. The propeptide occupies 23–44; that stretch reads IDEFDSDAEDDMLSLMANEQVR. The segment at 45–88 is knottin domain; that stretch reads AKACTPRLHDCSHDRHSCCRGELFKDVCYCFYPEGEDKTEVCSC. Disulfide bonds link cysteine 48–cysteine 63, cysteine 55–cysteine 72, cysteine 62–cysteine 88, and cysteine 74–cysteine 86. The tract at residues 89 to 108 is linear cationic cytotoxin domain; it reads QQPKSHKYIEKVVDKAKTVV.

Belongs to the neurotoxin 19 (CSTX) family. 05 (U4-Lctx) subfamily. As to expression, expressed by the venom gland.

It is found in the secreted. Enhances the high-affinity desensitization of human P2RX3 purinoceptors. The protein is U4-lycotoxin-Ls1a of Lycosa singoriensis (Wolf spider).